Reading from the N-terminus, the 832-residue chain is Conserved oligomeric Golgi complex subunit 5 (832 aa).

Pro residues-rich tracts occupy residues 1–11 (MALPPSSPSPS) and 23–38 (NPPP…PPQT). The interval 1 to 49 (MALPPSSPSPSSPSLQRLSTFKNPPPSSLSSGAPPPQTPSSSSSSPLDS) is disordered. A compositionally biased stretch (low complexity) spans 39-49 (PSSSSSSPLDS).

This sequence belongs to the COG5 family. In terms of assembly, homodimer. Component of the conserved oligomeric Golgi complex which is composed of eight different subunits and is required for normal Golgi morphology and localization. Interacts with COG3, COG6, COG7 and COG8.

The protein resides in the golgi apparatus membrane. Required for normal Golgi function. This is Conserved oligomeric Golgi complex subunit 5 from Arabidopsis thaliana (Mouse-ear cress).